The chain runs to 315 residues: Ribose-phosphate pyrophosphokinase (315 aa).

Residues Asp-37–Glu-39 and Arg-96–Gln-97 contribute to the ATP site. His-131 and Asp-170 together coordinate Mg(2+). Residue Lys-194 is part of the active site. D-ribose 5-phosphate is bound by residues Arg-196, Asp-220, and Asp-224–Thr-228.

This sequence belongs to the ribose-phosphate pyrophosphokinase family. Class I subfamily. In terms of assembly, homohexamer. Mg(2+) serves as cofactor.

Its subcellular location is the cytoplasm. It catalyses the reaction D-ribose 5-phosphate + ATP = 5-phospho-alpha-D-ribose 1-diphosphate + AMP + H(+). Its pathway is metabolic intermediate biosynthesis; 5-phospho-alpha-D-ribose 1-diphosphate biosynthesis; 5-phospho-alpha-D-ribose 1-diphosphate from D-ribose 5-phosphate (route I): step 1/1. In terms of biological role, involved in the biosynthesis of the central metabolite phospho-alpha-D-ribosyl-1-pyrophosphate (PRPP) via the transfer of pyrophosphoryl group from ATP to 1-hydroxyl of ribose-5-phosphate (Rib-5-P). The sequence is that of Ribose-phosphate pyrophosphokinase from Escherichia coli O6:H1 (strain CFT073 / ATCC 700928 / UPEC).